The chain runs to 254 residues: MALAPSKVSPFSGFSLSDGVGAVRNPTCSVSLSFLNKKVGSRNLGVSASTVPLTGVIFEPFEEVKKEELAVPTAGQVSLARQYYADECESAINEQINVEYNASYVYHSLFAYFDRDNVALKGFARFFKESSEEEREHAEKLMKYQNTRGGRVVLHPIKNVPSEFEHVEKGDALYAMELALSLEKLVNEKLRSVHSVADRNKDPQLADFIESEFLSEQVEAIKKISEYVAQLRMVGKGHGVWHFDQSLLHDGHAA.

The transit peptide at 1 to 48 (MALAPSKVSPFSGFSLSDGVGAVRNPTCSVSLSFLNKKVGSRNLGVSA) directs the protein to the chloroplast. Residues 49-81 (STVPLTGVIFEPFEEVKKEELAVPTAGQVSLAR) are extension peptide (EP). The Ferritin-like diiron domain occupies 82-235 (QYYADECESA…EYVAQLRMVG (154 aa)). Fe cation is bound by residues E99, E134, H137, E183, and Q217.

The protein belongs to the ferritin family. In terms of assembly, oligomer of 24 subunits. There are two types of subunits: L (light) chain and H (heavy) chain. The major chain can be light or heavy, depending on the species and tissue type. The functional molecule forms a roughly spherical shell with a diameter of 12 nm and contains a central cavity into which the insoluble mineral iron core is deposited.

The protein localises to the plastid. Its subcellular location is the chloroplast. It carries out the reaction 4 Fe(2+) + O2 + 4 H(+) = 4 Fe(3+) + 2 H2O. Functionally, stores iron in a soluble, non-toxic, readily available form. Important for iron homeostasis. Has ferroxidase activity. Iron is taken up in the ferrous form and deposited as ferric hydroxides after oxidation. This Phaseolus vulgaris (Kidney bean) protein is Ferritin, chloroplastic (PFE).